A 162-amino-acid polypeptide reads, in one-letter code: MNGVAAIAKGMATTLKVLFRKPVTVDYPYVKRPRAPRFRGRHELRTYENGLEMCVGCELCQVACPAAAITVQAAENDPDNPHSPGERYGYKYQVDLLRCIFCGMCEEACPTDCLHLTQEFELADFTRESLILQKEQLVNRNPSGFKVPMNVYPPFRRKAVNA.

4Fe-4S ferredoxin-type domains are found at residues 44–74 (LRTY…VQAA) and 90–119 (YKYQ…LTQE). Positions 54, 57, 60, 64, 99, 102, 105, and 109 each coordinate [4Fe-4S] cluster.

It belongs to the complex I 23 kDa subunit family. NDH-1 is composed of 14 different subunits. Subunits NuoA, H, J, K, L, M, N constitute the membrane sector of the complex. Requires [4Fe-4S] cluster as cofactor.

It is found in the cell membrane. The enzyme catalyses a quinone + NADH + 5 H(+)(in) = a quinol + NAD(+) + 4 H(+)(out). NDH-1 shuttles electrons from NADH, via FMN and iron-sulfur (Fe-S) centers, to quinones in the respiratory chain. The immediate electron acceptor for the enzyme in this species is believed to be ubiquinone. Couples the redox reaction to proton translocation (for every two electrons transferred, four hydrogen ions are translocated across the cytoplasmic membrane), and thus conserves the redox energy in a proton gradient. This chain is NADH-quinone oxidoreductase subunit I 1, found in Symbiobacterium thermophilum (strain DSM 24528 / JCM 14929 / IAM 14863 / T).